We begin with the raw amino-acid sequence, 436 residues long: Enolase (436 aa).

Residue Gln-167 coordinates (2R)-2-phosphoglycerate. Glu-209 (proton donor) is an active-site residue. The Mg(2+) site is built by Asp-246, Glu-291, and Asp-318. Positions 343, 372, 373, and 394 each coordinate (2R)-2-phosphoglycerate. The active-site Proton acceptor is the Lys-343.

Belongs to the enolase family. As to quaternary structure, component of the RNA degradosome, a multiprotein complex involved in RNA processing and mRNA degradation. Requires Mg(2+) as cofactor.

It is found in the cytoplasm. The protein localises to the secreted. Its subcellular location is the cell surface. It carries out the reaction (2R)-2-phosphoglycerate = phosphoenolpyruvate + H2O. It functions in the pathway carbohydrate degradation; glycolysis; pyruvate from D-glyceraldehyde 3-phosphate: step 4/5. Catalyzes the reversible conversion of 2-phosphoglycerate (2-PG) into phosphoenolpyruvate (PEP). It is essential for the degradation of carbohydrates via glycolysis. The chain is Enolase from Haemophilus influenzae (strain 86-028NP).